The following is a 711-amino-acid chain: Zinc finger CCCH domain-containing protein 32 (711 aa).

Low complexity predominate over residues 1 to 21 (MEADGAAAAAAAGEASTEAGA). Residues 1–23 (MEADGAAAAAAAGEASTEAGARP) are disordered. C3H1-type zinc fingers lie at residues 31–60 (LRRN…HSDN), 62–88 (RMNP…HPPI), and 112–139 (GKQL…HGPQ). 4 disordered regions span residues 221–246 (KSEK…GDHP), 339–376 (RFNG…HSER), 405–561 (SSLA…EGPK), and 573–701 (AAWA…DDDD). Composition is skewed to basic and acidic residues over residues 364 to 376 (SERS…HSER) and 413 to 427 (RNGE…YRER). The span at 428-437 (AHGHRSHRDH) shows a compositional bias: basic residues. 2 stretches are compositionally biased toward basic and acidic residues: residues 460–509 (SPDR…RRSS) and 585–594 (KQDKSAEVSH). Acidic residues-rich tracts occupy residues 648 to 663 (EDII…DADN) and 686 to 701 (ENAY…DDDD).

The protein is Zinc finger CCCH domain-containing protein 32 of Oryza sativa subsp. japonica (Rice).